A 324-amino-acid chain; its full sequence is Carbamate kinase (324 aa).

It belongs to the carbamate kinase family.

The protein resides in the cytoplasm. The catalysed reaction is hydrogencarbonate + NH4(+) + ATP = carbamoyl phosphate + ADP + H2O + H(+). The protein operates within amino-acid degradation; L-arginine degradation via ADI pathway. The sequence is that of Carbamate kinase from Rhizobium meliloti (strain 1021) (Ensifer meliloti).